Here is a 226-residue protein sequence, read N- to C-terminus: MNPIVINRLQRKLGYTFQQQELLLQALTHRSASSKHNERLEFLGDSILSFVIANELYRRFPRVDEGDMSRMRATLVRGNTLAEMAREFDLGECLRLGPGELKSGGFRRESILADTVEALIGGVFLDSDIHTIERLILEWYHSRLEEISPGDKQKDPKTRLQEYLQGRHLPLPSYLVVQVRGEAHDQEFTIHCQVSGLNEPVIGTGSSRRKAEQAAAEQALKQLELE.

The RNase III domain occupies 6–128 (INRLQRKLGY…LIGGVFLDSD (123 aa)). Glu41 serves as a coordination point for Mg(2+). Asp45 is an active-site residue. Positions 114 and 117 each coordinate Mg(2+). Residue Glu117 is part of the active site. Positions 155–225 (DPKTRLQEYL…AEQALKQLEL (71 aa)) constitute a DRBM domain.

It belongs to the ribonuclease III family. Homodimer. It depends on Mg(2+) as a cofactor.

It is found in the cytoplasm. The catalysed reaction is Endonucleolytic cleavage to 5'-phosphomonoester.. Digests double-stranded RNA. Involved in the processing of primary rRNA transcript to yield the immediate precursors to the large and small rRNAs (23S and 16S). Processes some mRNAs, and tRNAs when they are encoded in the rRNA operon. Processes pre-crRNA and tracrRNA of type II CRISPR loci if present in the organism. This chain is Ribonuclease 3, found in Yersinia pseudotuberculosis serotype O:1b (strain IP 31758).